We begin with the raw amino-acid sequence, 165 residues long: Large ribosomal subunit protein uL10 (165 aa).

Belongs to the universal ribosomal protein uL10 family. Part of the ribosomal stalk of the 50S ribosomal subunit. The N-terminus interacts with L11 and the large rRNA to form the base of the stalk. The C-terminus forms an elongated spine to which L12 dimers bind in a sequential fashion forming a multimeric L10(L12)X complex.

In terms of biological role, forms part of the ribosomal stalk, playing a central role in the interaction of the ribosome with GTP-bound translation factors. The polypeptide is Large ribosomal subunit protein uL10 (Buchnera aphidicola subsp. Schizaphis graminum (strain Sg)).